Reading from the N-terminus, the 301-residue chain is NDP-polyphosphate phosphotransferase 3 (301 aa).

A compositionally biased stretch (basic and acidic residues) spans 1 to 12 (MNRNGSTKDPRR). The disordered stretch occupies residues 1–21 (MNRNGSTKDPRRMTGAATGEI).

This sequence belongs to the polyphosphate kinase 2 (PPK2) family. Class I subfamily. It depends on Mg(2+) as a cofactor.

The catalysed reaction is [phosphate](n) + ATP = [phosphate](n+1) + ADP. The enzyme catalyses [phosphate](n) + CTP = [phosphate](n+1) + CDP. It carries out the reaction [phosphate](n) + GTP = [phosphate](n+1) + GDP. It catalyses the reaction [phosphate](n) + UTP = [phosphate](n+1) + UDP. In terms of biological role, uses inorganic polyphosphate (polyP) as a donor to convert NDP to NTP. PolyP hydrolysis is slightly faster with UDP, but it can also use ADP, GDP and CDP. The polypeptide is NDP-polyphosphate phosphotransferase 3 (Ruegeria pomeroyi (strain ATCC 700808 / DSM 15171 / DSS-3) (Silicibacter pomeroyi)).